The following is a 123-amino-acid chain: Sirohydrochlorin cobaltochelatase (123 aa).

Catalysis depends on His9, which acts as the Proton acceptor. His9 contributes to the Co(2+) binding site. Substrate-binding positions include Glu43 and 68-73; that span reads FAAGMH. His73 contributes to the Co(2+) binding site.

It belongs to the CbiX family. CbiXS subfamily. In terms of assembly, homotetramer; dimer of dimers.

The catalysed reaction is Co-sirohydrochlorin + 2 H(+) = sirohydrochlorin + Co(2+). It participates in cofactor biosynthesis; adenosylcobalamin biosynthesis; cob(II)yrinate a,c-diamide from sirohydrochlorin (anaerobic route): step 1/10. Catalyzes the insertion of Co(2+) into sirohydrochlorin as part of the anaerobic pathway to cobalamin biosynthesis. This Sulfolobus acidocaldarius (strain ATCC 33909 / DSM 639 / JCM 8929 / NBRC 15157 / NCIMB 11770) protein is Sirohydrochlorin cobaltochelatase.